Consider the following 510-residue polypeptide: Photosystem II CP47 reaction center protein (510 aa).

At 2–16 (GLPWYRVHTVLINDP) the chain is on the cytoplasmic side. A helical membrane pass occupies residues 17-37 (GRLIAAHLMHTALVAGWAGSM). Over 38-94 (ALYELATFDPSDPVLNPMWRQGMFVLPFMARLGVTGSWSGWSITGETGIDPGFWSFE) the chain is Lumenal. The helical transmembrane segment at 95 to 116 (GVALAHIVLSGLLFLAACWHWV) threads the bilayer. The Cytoplasmic portion of the chain corresponds to 117–134 (YWDLELFRDPRTGEPALD). The helical transmembrane segment at 135 to 157 (LPKMFGIHLFLAGLLCFGFGAFH) threads the bilayer. Residues 158–196 (LTGLFGPGMWVSDPYGLTGSVQPVAPEWGPDGFNPYNPG) are Lumenal-facing. The chain crosses the membrane as a helical span at residues 197-218 (GVVAHHIAAGIVGIIAGLFHIL). At 219-233 (VRPPQRLYKALRMGN) the chain is on the cytoplasmic side. The chain crosses the membrane as a helical span at residues 234 to 254 (IETVLSSSIAAVFFAAFVVAG). Over 255 to 450 (TMWYGSATTP…GIFRTSPRGW (196 aa)) the chain is Lumenal. Residues 451 to 473 (FTFAHAVFALLFFFGHIWHGART) traverse the membrane as a helical segment. Residues 474-510 (LFRDVFSGIDPELSPEQVEWGFYQKVGDVTTRRKEAV) are Cytoplasmic-facing.

In terms of assembly, PSII is composed of 1 copy each of membrane proteins PsbA, PsbB, PsbC, PsbD, PsbE, PsbF, PsbH, PsbI, PsbJ, PsbK, PsbL, PsbM, PsbT, PsbX, PsbY, PsbZ, Psb30/Ycf12, peripheral proteins PsbO, CyanoQ (PsbQ), PsbU, PsbV and a large number of cofactors. It forms dimeric complexes. Part of a photosystem II (PSII) assembly intermediate complex PSII-I; crystallized from a strain deleted of psbJ, it forms monomeric PSII before addition of the oxygen evolving complex. PSII-I includes 3 assembly factors not found in mature PSII (Psb27, Psb28 and Psb34). It depends on Binds multiple chlorophylls. PSII binds additional chlorophylls, carotenoids and specific lipids. as a cofactor.

Its subcellular location is the cellular thylakoid membrane. One of the components of the core complex of photosystem II (PSII). It binds chlorophyll and helps catalyze the primary light-induced photochemical processes of PSII. PSII is a light-driven water:plastoquinone oxidoreductase, using light energy to abstract electrons from H(2)O, generating O(2) and a proton gradient subsequently used for ATP formation. This chain is Photosystem II CP47 reaction center protein, found in Thermosynechococcus vestitus (strain NIES-2133 / IAM M-273 / BP-1).